A 152-amino-acid polypeptide reads, in one-letter code: FMN reductase (NADH) RutF (152 aa).

The protein belongs to the non-flavoprotein flavin reductase family. RutF subfamily.

The enzyme catalyses FMNH2 + NAD(+) = FMN + NADH + 2 H(+). Its function is as follows. Catalyzes the reduction of FMN to FMNH2 which is used to reduce pyrimidine by RutA via the Rut pathway. This is FMN reductase (NADH) RutF from Shigella dysenteriae serotype 1 (strain Sd197).